Here is a 1458-residue protein sequence, read N- to C-terminus: Probable serine/threonine-protein kinase yakA (1458 aa).

A compositionally biased stretch (low complexity) spans Asn32–Asn76. Residues Asn32–Asn83 form a disordered region. The 344-residue stretch at Tyr205–Ile548 folds into the Protein kinase domain. Residues Leu211–Val219 and Lys234 each bind ATP. Catalysis depends on Asp332, which acts as the Proton acceptor. Disordered stretches follow at residues His441–Pro462 and His545–Gln571. The span at Ser446 to Asn459 shows a compositional bias: low complexity. A coiled-coil region spans residues Asn588 to Ser643. Composition is skewed to low complexity over residues Thr659–Phe709, Ser791–Ser800, Gln808–Asn853, and Asp861–Ser870. Disordered regions lie at residues Thr659–Phe714 and Ser791–Asp874. Positions Asn878–Leu927 form a coiled coil. Disordered regions lie at residues Glu930 to Ile1095, Asn1128 to Ile1161, Asp1233 to Tyr1347, Gln1375 to Ser1399, and Gln1435 to Thr1458. Composition is skewed to low complexity over residues Gln961–Gln988, Gln1016–Gln1042, and Gln1064–Gln1093. Polar residues-rich tracts occupy residues Asn1128–Gly1158 and Asp1233–Pro1245. Composition is skewed to low complexity over residues Ser1246–Tyr1255 and Asn1264–Asn1279. Polar residues predominate over residues Ser1280–Phe1291. Low complexity predominate over residues Pro1292–Ser1309. 2 stretches are compositionally biased toward polar residues: residues Gly1310 to Gly1321 and Gln1331 to Ser1344. Coiled-coil stretches lie at residues Gln1346–Thr1383 and Arg1409–Ala1442.

The protein belongs to the protein kinase superfamily. CMGC Ser/Thr protein kinase family. MNB/DYRK subfamily.

The protein localises to the cytoplasm. The catalysed reaction is L-seryl-[protein] + ATP = O-phospho-L-seryl-[protein] + ADP + H(+). It catalyses the reaction L-threonyl-[protein] + ATP = O-phospho-L-threonyl-[protein] + ADP + H(+). It carries out the reaction L-tyrosyl-[protein] + ATP = O-phospho-L-tyrosyl-[protein] + ADP + H(+). Functionally, general sensor of environmental conditions, such as heat stress, effecting changes through pkaC. Essential for survival to nitrosoative and oxidative stresses. Required for cell cycle control, not only at the onset but also during development (aggregation process and postaggregative development). This chain is Probable serine/threonine-protein kinase yakA (yakA), found in Dictyostelium discoideum (Social amoeba).